The primary structure comprises 989 residues: E3 ubiquitin-protein ligase Arkadia (989 aa).

Residues Lys-19, Lys-33, Lys-46, Lys-58, Lys-72, Lys-86, Lys-95, and Lys-109 each participate in a glycyl lysine isopeptide (Lys-Gly) (interchain with G-Cter in SUMO2) cross-link. Residues 63-195 (FSHLCDDSQK…TEADPVPSLL (133 aa)) form a disordered region. Residues 65–88 (HLCDDSQKQEKDMTGNQQEQEKSG) are compositionally biased toward basic and acidic residues. The segment covering 97-109 (QQAGPSYVQNCVK) has biased composition (polar residues). Over residues 110 to 120 (ENQEILGRRQQ) the composition is skewed to basic and acidic residues. Low complexity predominate over residues 131–144 (SSLSECLSSPSSSL). A Glycyl lysine isopeptide (Lys-Gly) (interchain with G-Cter in SUMO2) cross-link involves residue Lys-172. Residues 173–183 (SRSHSARSHKW) show a composition bias toward basic residues. Residues Lys-197 and Lys-217 each participate in a glycyl lysine isopeptide (Lys-Gly) (interchain with G-Cter in SUMO2) cross-link. The segment at 213 to 293 (KRLVKSSSSQ…PSNPAAPSGS (81 aa)) is disordered. An interaction with AXIN1 region spans residues 240-402 (ALAQRKYALL…VPTTSARMDS (163 aa)). 2 stretches are compositionally biased toward low complexity: residues 248-270 (LLSS…SSST) and 278-291 (ASAS…AAPS). The SUMO interaction motif 1 (SIM) signature appears at 298-302 (VVVIE). An SUMO interaction motif 2 (SIM) motif is present at residues 323–329 (EVEIVTV). Positions 335–367 (SRSTLGHSRSHWSQGSSSHTGRPQESRNRSRIS) are disordered. Over residues 345-355 (HWSQGSSSHTG) the composition is skewed to low complexity. The SUMO interaction motif 3 (SIM) signature appears at 380–384 (VVDLT). Disordered stretches follow at residues 388–475 (DEPT…MPRL), 506–559 (HGHH…YHDQ), and 641–675 (MPPP…PPPQ). Positions 393 to 451 (VPTTSARMDSQTTSASINNSNPSTSEQASDTTSTVASSQPSTVSETEATLTSNSATGSS) are enriched in polar residues. The segment covering 506 to 520 (HGHHFQHHHHHHHTP) has biased composition (basic residues). Over residues 548-558 (ANSSSGSSYHD) the composition is skewed to polar residues. The ubiquitin binding stretch occupies residues 902–904 (YPH). Residues Lys-918 and Lys-922 each participate in a glycyl lysine isopeptide (Lys-Gly) (interchain with G-Cter in SUMO2) cross-link. Cys-937 and Cys-940 together coordinate Zn(2+). The RING-type; atypical zinc-finger motif lies at 937-978 (CTICLSILEEGEDVRRLPCMHLFHQVCVDQWLITNKKCPICR). Residues 952 to 956 (RLPCM) are ubiquitin binding. The Zn(2+) site is built by His-960 and Cys-963.

It belongs to the Arkadia family. Monomer. Interacts with SMAD6, SMAD7, AXIN1, AXIN2 and SKIL isoform SNON. Interacts with (phosphorylated) SMAD2 and SMAD3. Part of a complex containing RNF111, AXIN1 and SMAD7. Interacts (via SIM domains) with SUMO1 and SUMO2. Ubiquitously expressed.

Its subcellular location is the nucleus. The protein resides in the cytoplasm. The protein localises to the PML body. It carries out the reaction S-ubiquitinyl-[E2 ubiquitin-conjugating enzyme]-L-cysteine + [acceptor protein]-L-lysine = [E2 ubiquitin-conjugating enzyme]-L-cysteine + N(6)-ubiquitinyl-[acceptor protein]-L-lysine.. It participates in protein modification; protein ubiquitination. Its activity is regulated as follows. Binds free ubiquitin non-covalently via its RING-type zinc finger. Ubiquitin-binding leads to enhance the E3 ubiquitin-protein ligase activity by stabilizing the ubiquitin-conjugating enzyme E2 (donor ubiquitin) in the 'closed' conformation and activating ubiquitin transfer. Its function is as follows. E3 ubiquitin-protein ligase required for mesoderm patterning during embryonic development. Acts as an enhancer of the transcriptional responses of the SMAD2/SMAD3 effectors, which are activated downstream of BMP. Acts by mediating ubiquitination and degradation of SMAD inhibitors such as SMAD7, inducing their proteasomal degradation and thereby enhancing the transcriptional activity of TGF-beta and BMP. In addition to enhance transcription of SMAD2/SMAD3 effectors, also regulates their turnover by mediating their ubiquitination and subsequent degradation, coupling their activation with degradation, thereby ensuring that only effectors 'in use' are degraded. Activates SMAD3/SMAD4-dependent transcription by triggering signal-induced degradation of SNON isoform of SKIL. Associates with UBE2D2 as an E2 enzyme. Specifically binds polysumoylated chains via SUMO interaction motifs (SIMs) and mediates ubiquitination of sumoylated substrates. Catalyzes 'Lys-63'-linked ubiquitination of sumoylated XPC in response to UV irradiation, promoting nucleotide excision repair. Mediates ubiquitination and degradation of sumoylated PML. The regulation of the BMP-SMAD signaling is however independent of sumoylation and is not dependent of SUMO interaction motifs (SIMs). This Mus musculus (Mouse) protein is E3 ubiquitin-protein ligase Arkadia.